We begin with the raw amino-acid sequence, 352 residues long: C-X-C chemokine receptor type 4 (352 aa).

The important for chemokine binding and signaling stretch occupies residues 1–21 (MEGISIYTSDNYTEEMGSGDY). Over 1–38 (MEGISIYTSDNYTEEMGSGDYDSIKEPCFREENAHFNR) the chain is Extracellular. Tyr7 bears the Sulfotyrosine mark. An N-linked (GlcNAc...) asparagine glycan is attached at Asn11. Tyr12 carries the sulfotyrosine modification. An O-linked (Xyl...) (chondroitin sulfate) serine glycan is attached at Ser18. Tyr21 carries the post-translational modification Sulfotyrosine. Disulfide bonds link Cys28–Cys274 and Cys109–Cys186. The chain crosses the membrane as a helical span at residues 39–63 (IFLPTIYSIIFLTGIVGNGLVILVM). Residues 64–77 (GYQKKLRSMTDKYR) lie on the Cytoplasmic side of the membrane. Residues 78 to 99 (LHLSVADLLFVITLPFWAVDAV) form a helical membrane-spanning segment. Residues 94–97 (WAVD) are chemokine binding. The Extracellular portion of the chain corresponds to 100 to 110 (ANWYFGNFLCK). A helical membrane pass occupies residues 111-130 (AVHVIYTVNLYSSVLILAFI). Residues 113-117 (HVIYT) form a chemokine binding region. Residues 131-154 (SLDRYLAIVHATNSQKPRKLLAEK) lie on the Cytoplasmic side of the membrane. The Important for signaling signature appears at 133 to 135 (DRY). The segment at 135–147 (YLAIVHATNSQKP) is involved in dimerization; when bound to chemokine. The helical transmembrane segment at 155-174 (VVYVGVWIPALLLTIPDFIF) threads the bilayer. At 175–195 (ASVSEADDRYICDRFYPNDLW) the chain is on the extracellular side. Positions 186 to 190 (CDRFY) are chemokine binding, important for signaling. Residues 191–210 (PNDLWVVVFQFQHIMVGLIL) are involved in dimerization. Residues 196–216 (VVVFQFQHIMVGLILPGIVIL) traverse the membrane as a helical segment. Over 217–241 (SCYCIIISKLSHSKGHQKRKALKTT) the chain is Cytoplasmic. The helical transmembrane segment at 242-261 (VILILAFFACWLPYYIGISI) threads the bilayer. Topologically, residues 262 to 282 (DSFILLEIIKQGCEFENTVHK) are extracellular. An involved in dimerization region spans residues 266-268 (LLE). Residues 283-302 (WISITEALAFFHCCLNPILY) form a helical membrane-spanning segment. Residues 303–352 (AFLGAKFKTSAQHALTSVSRGSSLKILSKGKRGGHSSVSTESESSSFHSS) are Cytoplasmic-facing. Ser319 and Ser321 each carry phosphoserine. Phosphoserine; by PKC and GRK6 occurs at positions 324 and 325. Positions 329-352 (LSKGKRGGHSSVSTESESSSFHSS) are disordered. Ser330 is subject to Phosphoserine; by GRK6. Lys331 participates in a covalent cross-link: Glycyl lysine isopeptide (Lys-Gly) (interchain with G-Cter in ubiquitin). The segment covering 337-352 (HSSVSTESESSSFHSS) has biased composition (low complexity). Ser339 carries the phosphoserine; by GRK6 modification. Phosphoserine occurs at positions 348 and 351.

This sequence belongs to the G-protein coupled receptor 1 family. Monomer. Can form homodimers. Interacts with CD164. Interacts with ARRB2; the interaction is dependent on the C-terminal phosphorylation of CXCR4 and allows activation of MAPK1 and MAPK3. Interacts with ARR3; the interaction is dependent on the C-terminal phosphorylation of CXCR4 and modulates calcium mobilization. Interacts with RNF113A; the interaction, enhanced by CXCL12, promotes CXCR4 ubiquitination and subsequent degradation. Interacts (via the cytoplasmic C-terminal) with ITCH (via the WW domains I and II); the interaction, enhanced by CXCL12, promotes CXCR4 ubiquitination and leads to its degradation. Interacts with extracellular ubiquitin. Interacts with DBN1; this interaction is enhanced by antigenic stimulation. Following LPS binding, may form a complex with GDF5, HSP90AA1 and HSPA8. In terms of processing, phosphorylated on agonist stimulation. Rapidly phosphorylated on serine and threonine residues in the C-terminal. Phosphorylation at Ser-324 and Ser-325 leads to recruitment of ITCH, ubiquitination and protein degradation. Ubiquitinated after ligand binding, leading to its degradation. Ubiquitinated by ITCH at the cell membrane on agonist stimulation. The ubiquitin-dependent mechanism, endosomal sorting complex required for transport (ESCRT), then targets CXCR4 for lysosomal degradation. This process is dependent also on prior Ser-/Thr-phosphorylation in the C-terminal of CXCR4. Also binding of ARRB1 to STAM negatively regulates CXCR4 sorting to lysosomes though modulating ubiquitination of SFR5S. Post-translationally, sulfation is required for efficient binding of CXCL12/SDF-1alpha and promotes its dimerization. In terms of processing, O- and N-glycosylated. N-glycosylation can mask coreceptor function. The O-glycosylation chondroitin sulfate attachment does not affect interaction with CXCL12/SDF-1alpha nor its coreceptor activity.

The protein localises to the cell membrane. The protein resides in the cell junction. It localises to the early endosome. Its subcellular location is the late endosome. It is found in the lysosome. Its function is as follows. Receptor for the C-X-C chemokine CXCL12/SDF-1 that transduces a signal by increasing intracellular calcium ion levels and enhancing MAPK1/MAPK3 activation. Involved in the AKT signaling cascade. Plays a role in regulation of cell migration, e.g. during wound healing. Acts as a receptor for extracellular ubiquitin; leading to enhanced intracellular calcium ions and reduced cellular cAMP levels. Binds bacterial lipopolysaccharide (LPS) et mediates LPS-induced inflammatory response, including TNF secretion by monocytes. Involved in hematopoiesis and in cardiac ventricular septum formation. Also plays an essential role in vascularization of the gastrointestinal tract, probably by regulating vascular branching and/or remodeling processes in endothelial cells. Involved in cerebellar development. In the CNS, could mediate hippocampal-neuron survival. This is C-X-C chemokine receptor type 4 (CXCR4) from Macaca fascicularis (Crab-eating macaque).